A 458-amino-acid chain; its full sequence is tRNA modification GTPase MnmE (458 aa).

3 residues coordinate (6S)-5-formyl-5,6,7,8-tetrahydrofolate: arginine 22, glutamate 85, and arginine 124. Residues 220–379 (GLATAIIGRP…LEEAISRLFF (160 aa)) form the TrmE-type G domain. Asparagine 230 serves as a coordination point for K(+). GTP-binding positions include 230-235 (NVGKSS), 249-255 (TDIPGTT), and 274-277 (DTAG). Serine 234 contributes to the Mg(2+) binding site. Residues threonine 249, isoleucine 251, and threonine 254 each contribute to the K(+) site. Threonine 255 is a Mg(2+) binding site. A (6S)-5-formyl-5,6,7,8-tetrahydrofolate-binding site is contributed by lysine 458.

It belongs to the TRAFAC class TrmE-Era-EngA-EngB-Septin-like GTPase superfamily. TrmE GTPase family. As to quaternary structure, homodimer. Heterotetramer of two MnmE and two MnmG subunits. K(+) is required as a cofactor.

It localises to the cytoplasm. Exhibits a very high intrinsic GTPase hydrolysis rate. Involved in the addition of a carboxymethylaminomethyl (cmnm) group at the wobble position (U34) of certain tRNAs, forming tRNA-cmnm(5)s(2)U34. The polypeptide is tRNA modification GTPase MnmE (Shouchella clausii (strain KSM-K16) (Alkalihalobacillus clausii)).